We begin with the raw amino-acid sequence, 202 residues long: Probable chemoreceptor glutamine deamidase CheD 2 (202 aa).

The protein belongs to the CheD family.

The catalysed reaction is L-glutaminyl-[protein] + H2O = L-glutamyl-[protein] + NH4(+). In terms of biological role, probably deamidates glutamine residues to glutamate on methyl-accepting chemotaxis receptors (MCPs), playing an important role in chemotaxis. The chain is Probable chemoreceptor glutamine deamidase CheD 2 from Shewanella oneidensis (strain ATCC 700550 / JCM 31522 / CIP 106686 / LMG 19005 / NCIMB 14063 / MR-1).